Consider the following 424-residue polypeptide: Arginine biosynthesis bifunctional protein ArgJ (424 aa).

Positions 172, 198, 209, 296, 419, and 424 each coordinate substrate. Threonine 209 acts as the Nucleophile in catalysis.

This sequence belongs to the ArgJ family. In terms of assembly, heterotetramer of two alpha and two beta chains.

It localises to the cytoplasm. The catalysed reaction is N(2)-acetyl-L-ornithine + L-glutamate = N-acetyl-L-glutamate + L-ornithine. It catalyses the reaction L-glutamate + acetyl-CoA = N-acetyl-L-glutamate + CoA + H(+). It functions in the pathway amino-acid biosynthesis; L-arginine biosynthesis; L-ornithine and N-acetyl-L-glutamate from L-glutamate and N(2)-acetyl-L-ornithine (cyclic): step 1/1. It participates in amino-acid biosynthesis; L-arginine biosynthesis; N(2)-acetyl-L-ornithine from L-glutamate: step 1/4. Its function is as follows. Catalyzes two activities which are involved in the cyclic version of arginine biosynthesis: the synthesis of N-acetylglutamate from glutamate and acetyl-CoA as the acetyl donor, and of ornithine by transacetylation between N(2)-acetylornithine and glutamate. This Gluconobacter oxydans (strain 621H) (Gluconobacter suboxydans) protein is Arginine biosynthesis bifunctional protein ArgJ.